Here is a 1012-residue protein sequence, read N- to C-terminus: PHD finger protein 20 (1012 aa).

Tudor domains follow at residues 4 to 69 and 83 to 147; these read HPPN…RPLE and GSSE…GNAR. The tract at residues 142-336 is disordered; sequence IVGNARPKET…RSSRLSTNGT (195 aa). The span at 147–245 shows a compositional bias: basic and acidic residues; that stretch reads RPKETDHKSL…QVDKKPENDI (99 aa). Ser-159 is subject to Phosphoserine. Residues 257–269 constitute a DNA-binding region (a.T hook); it reads KRKRGRPPSIAPT. Residues 271-280 are compositionally biased toward polar residues; the sequence is VDSNSQTLQP. Residues 297 to 325 show a composition bias toward basic and acidic residues; that stretch reads PLKRPRLDKNSSQEKSKNYSENTDKDLSR. A C2H2-type zinc finger spans residues 452-477; sequence FRCKVVDCLKFFRKAKLLHYHMKYFH. Residues 481 to 490 show a composition bias toward basic and acidic residues; it reads KSLEPEESPG. Positions 481–611 are disordered; it reads KSLEPEESPG…KGKVKALEED (131 aa). At Ser-488 the chain carries Phosphoserine. The segment covering 497-509 has biased composition (polar residues); it reads RGPSASDKPSQET. A compositionally biased stretch (basic and acidic residues) spans 522–538; that stretch reads TKDKEKNKEKKFKEFVR. The span at 539-551 shows a compositional bias: basic residues; sequence VKPKKKKKKKKKT. The segment at 654–700 adopts a PHD-type zinc-finger fold; sequence RCICEVQEENDFMIQCEECQCWQHGVCMGLLEENVPEKYTCYVCQDP. Lys-843 carries the N6-acetyllysine modification. The interval 866–912 is disordered; sequence DAVNPLHENGDDSLSPRLGWPLDQDRSKGDSDPKPGSPKVKEYVSKK. Ser-878 and Ser-880 each carry phosphoserine. Basic and acidic residues predominate over residues 888 to 912; sequence DQDRSKGDSDPKPGSPKVKEYVSKK.

Homodimer; disulfide-linked. Component of some MLL1/MLL complex, at least composed of the core components KMT2A/MLL1, ASH2L, HCFC1, WDR5 and RBBP5, as well as the facultative components BACC1, CHD8, E2F6, HSP70, INO80C, KANSL1, LAS1L, MAX, MCRS1, MGA, KAT8/MOF, PELP1, PHF20, PRP31, RING2, RUVB1/TIP49A, RUVB2/TIP49B, SENP3, TAF1, TAF4, TAF6, TAF7, TAF9 and TEX10. Component of the NSL complex at least composed of MOF/KAT8, KANSL1, KANSL2, KANSL3, MCRS1, PHF20, OGT1/OGT, WDR5 and HCFC1. In terms of processing, ubiquitinated by TRIM26; leading to proteasomal degradation. In terms of tissue distribution, expressed in heart, kidney, liver, lung, pancreas, placenta, spleen and testis. Not expressed in brain, skeletal muscle, colon, ovary, prostate, small intestine and thymus. Expressed in colon and ovary cancer cell lines while it is not expressed in the respective normal tissues.

The protein localises to the nucleus. Its function is as follows. Methyllysine-binding protein, component of the MOF histone acetyltransferase protein complex. Not required for maintaining the global histone H4 'Lys-16' acetylation (H4K16ac) levels or locus specific histone acetylation, but instead works downstream in transcriptional regulation of MOF target genes. As part of the NSL complex it may be involved in acetylation of nucleosomal histone H4 on several lysine residues. Contributes to methyllysine-dependent p53/TP53 stabilization and up-regulation after DNA damage. This chain is PHD finger protein 20 (PHF20), found in Homo sapiens (Human).